The following is a 351-amino-acid chain: Inner kinetochore subunit fta2 (351 aa).

Residues 1-71 (MSGRRYSQIS…SSNGRVDTDR (71 aa)) form a disordered region. The span at 7–18 (SQISQQEGSSSS) shows a compositional bias: low complexity. Residues 54–66 (NENSGQSKSSNGR) show a composition bias toward polar residues.

The protein belongs to the CENP-P/CTF19 family. Component of the heterotetrameric kinetochore subcomplex COMA, which consists of fta2, fta7, mal2 and mis17. The COMA subcomplex is part of a larger constitutive centromere-associated network (CCAN) (also known as central kinetochore Sim4 complex in fission yeast), which is composed of at least cnl2, cnp3, cnp20, fta1, fta2, fta3, fta4, fta6, fta7, mal2, mhf1, mhf2, mis6, mis15, mis17, sim4 and wip1.

It localises to the nucleus. The protein localises to the chromosome. It is found in the centromere. Its subcellular location is the kinetochore. In terms of biological role, component of the kinetochore, a multiprotein complex that assembles on centromeric DNA and attaches chromosomes to spindle microtubules, mediating chromosome segregation and sister chromatid segregation during meiosis and mitosis. Component of the inner kinetochore COMA complex, which connects centromere-associated proteins and the outer kinetochore. COMA interacts with other inner kinetochore proteins to form the inner kinetochore constitutive centromere-associated network (CCAN), which serves as a structural platform for outer kinetochore assembly. Fta2, fta3 and fta4 associate with the central core (cnt) and inner repeat (inr) region of the centromere. This is Inner kinetochore subunit fta2 (fta2) from Schizosaccharomyces pombe (strain 972 / ATCC 24843) (Fission yeast).